Here is a 422-residue protein sequence, read N- to C-terminus: Carboxypeptidase B2 (422 aa).

The first 21 residues, 1–21 (MKLHGLGILVAIILYEQHGFA), serve as a signal peptide directing secretion. Positions 22–113 (FQSGQVLSAL…QTFNDTVSPR (92 aa)) are cleaved as a propeptide — activation peptide. Residues Asn-43, Asn-72, Asn-84, and Asn-107 are each glycosylated (N-linked (GlcNAc...) asparagine). The Peptidase M14 domain occupies 121-418 (QYHSLNEIYS…AAISKIVWHV (298 aa)). Cysteines 177 and 190 form a disulfide. Zn(2+)-binding residues include His-180 and Glu-183. Residues 180 to 183 (HARE) and Arg-238 each bind substrate. A glycan (N-linked (GlcNAc...) asparagine) is linked at Asn-240. Intrachain disulfides connect Cys-249/Cys-273 and Cys-264/Cys-278. Position 255–256 (255–256 (NR)) interacts with substrate. His-309 serves as a coordination point for Zn(2+). 310 to 311 (SY) is a binding site for substrate. Asn-322 carries an N-linked (GlcNAc...) asparagine glycan. Tyr-362 contacts substrate. Glu-384 (proton donor/acceptor) is an active-site residue.

The protein belongs to the peptidase M14 family. Requires Zn(2+) as cofactor. Plasma; synthesized in the liver.

It is found in the secreted. It carries out the reaction Release of C-terminal Arg and Lys from a polypeptide.. Its activity is regulated as follows. TAFI/CPB2 is unique among carboxypeptidases in that it spontaneously inactivates with a short half-life, a property that is crucial for its role in controlling blood clot lysis. The zymogen is stabilized by interactions with the activation peptide. Release of the activation peptide increases a dynamic flap mobility and in time this leads to conformational changes that disrupt the catalytic site and expose a cryptic thrombin-cleavage site present at Arg-323. In terms of biological role, cleaves C-terminal arginine or lysine residues from biologically active peptides such as kinins or anaphylatoxins in the circulation thereby regulating their activities. Down-regulates fibrinolysis by removing C-terminal lysine residues from fibrin that has already been partially degraded by plasmin. This is Carboxypeptidase B2 (Cpb2) from Mus musculus (Mouse).